The sequence spans 146 residues: Large ribosomal subunit protein uL15 (146 aa).

Residues 1 to 57 (MDLSNLKAAEGSVHSDNFRRGRGHGSGNGKTAGKGHKGQKARSGAPRPGFEGGQMPL) are disordered.

Belongs to the universal ribosomal protein uL15 family. As to quaternary structure, part of the 50S ribosomal subunit.

Its function is as follows. Binds to the 23S rRNA. This is Large ribosomal subunit protein uL15 from Agathobacter rectalis (strain ATCC 33656 / DSM 3377 / JCM 17463 / KCTC 5835 / VPI 0990) (Eubacterium rectale).